The following is a 352-amino-acid chain: NAD(P)H oxidoreductase RTN4IP1, mitochondrial (352 aa).

The Enoyl reductase (ER) domain maps to glutamate 11–isoleucine 348. Residues valine 165, tyrosine 206, alanine 296, and phenylalanine 298 each contribute to the NADPH site.

This sequence belongs to the zinc-containing alcohol dehydrogenase family. Quinone oxidoreductase subfamily.

The protein resides in the mitochondrion matrix. It catalyses the reaction a quinone + NADH + H(+) = a quinol + NAD(+). The enzyme catalyses a quinone + NADPH + H(+) = a quinol + NADP(+). The protein operates within cofactor biosynthesis; ubiquinone biosynthesis. Its function is as follows. NAD(P)H oxidoreductase involved in the ubiquinone biosynthetic pathway. Required for the O-methyltransferase activity of coq3. The protein is NAD(P)H oxidoreductase RTN4IP1, mitochondrial (rtn4ip1) of Dictyostelium discoideum (Social amoeba).